Reading from the N-terminus, the 433-residue chain is Serine carboxypeptidase-like 8 (433 aa).

Residues 1-19 (MSLKIKFLLLLVLYHHVDS) form the signal peptide. Cystine bridges form between cysteine 78–cysteine 323, cysteine 241–cysteine 255, and cysteine 279–cysteine 289. Asparagine 99 carries N-linked (GlcNAc...) asparagine glycosylation. Residue serine 173 is part of the active site. N-linked (GlcNAc...) asparagine glycans are attached at residues asparagine 283, asparagine 324, and asparagine 342. Active-site residues include aspartate 358 and histidine 411. Asparagine 418 carries an N-linked (GlcNAc...) asparagine glycan.

This sequence belongs to the peptidase S10 family. Post-translationally, N-glycosylated. Highly expressed in seedlings. Expressed in leaves, stems, flowers and siliques, and at low levels in roots.

The protein resides in the vacuole. It carries out the reaction 1-O-(trans-sinapoyl)-beta-D-glucose + (S)-malate = sinapoyl (S)-malate + D-glucose. It catalyses the reaction 2 1-O-(trans-sinapoyl)-beta-D-glucose = 1,2-di-O-sinapoyl beta-D-glucose + D-glucose. Its activity is regulated as follows. 95% inhibition by diisopropyl fluorophosphate (DFP) and 30% by phenylmethylsulfonyl fluoride (PMSF). In terms of biological role, involved in plants secondary metabolism. Functions as acyltransferase to form the sinapate ester sinapoylmalate. Also capable of catalyzing the formation of 1,2-bis-O-sinapoyl beta-D-glucoside. This chain is Serine carboxypeptidase-like 8, found in Arabidopsis thaliana (Mouse-ear cress).